The primary structure comprises 147 residues: Hemoglobin subunit beta (147 aa).

One can recognise a Globin domain in the interval 3–147 (HWTAEEKQLI…VAHALARKYH (145 aa)). Heme b contacts are provided by histidine 64 and histidine 93.

Belongs to the globin family. Heterotetramer of two alpha chains and two beta chains. Red blood cells.

Involved in oxygen transport from the lung to the various peripheral tissues. The sequence is that of Hemoglobin subunit beta (HBB) from Cairina moschata (Muscovy duck).